The sequence spans 762 residues: Serine/threonine-protein kinase PLK4 (762 aa).

Residues 14–268 (YEVQHLLGKG…LEQVLRHPFM (255 aa)) form the Protein kinase domain. ATP is bound by residues 20-28 (LGKGGFACV) and Lys-43. Asp-139 serves as the catalytic Proton acceptor. Positions 383-498 (AECISMPPLN…ARFVSLVKSK (116 aa)) constitute a Cryptic POLO box 1 (CPB1) domain. Residues 499 to 602 (TPKVTYFSGL…GRRPTPEVMP (104 aa)) form the Cryptic POLO box 2 (CPB2) domain. Positions 657-736 (PIKRLNVPGV…LPQVQMKLKS (80 aa)) constitute a POLO box domain.

It belongs to the protein kinase superfamily. Ser/Thr protein kinase family. CDC5/Polo subfamily. As to quaternary structure, homodimer. Post-translationally, ubiquitinated by the SCF(Slimb) ubiquitin ligase complex; leading to its degradation by the proteasome during interphase and regulating centriole number and ensuring the block to centriole reduplication.

The protein resides in the cytoplasm. The protein localises to the cytoskeleton. It localises to the microtubule organizing center. Its subcellular location is the centrosome. It is found in the centriole. It catalyses the reaction L-seryl-[protein] + ATP = O-phospho-L-seryl-[protein] + ADP + H(+). The catalysed reaction is L-threonyl-[protein] + ATP = O-phospho-L-threonyl-[protein] + ADP + H(+). In terms of biological role, serine/threonine-protein kinase that plays a central role in centriole duplication. Able to trigger procentriole formation on the surface of the mother centriole cylinder, using mother centriole as a platform, leading to the recruitment of centriole biogenesis proteins such as sas-6. When overexpressed, it is able to induce centrosome amplification through the simultaneous generation of multiple procentrioles adjoining each parental centriole during S phase. Centrosome amplification following overexpression can initiate tumorigenesis, highlighting the importance of centrosome regulation in cancers. This is Serine/threonine-protein kinase PLK4 (SAK) from Drosophila grimshawi (Hawaiian fruit fly).